A 551-amino-acid chain; its full sequence is Chaperonin GroEL (551 aa).

ATP is bound by residues 30–33 (TLGP), lysine 51, 87–91 (DGTTT), glycine 415, 479–481 (NAA), and aspartate 495.

It belongs to the chaperonin (HSP60) family. As to quaternary structure, forms a cylinder of 14 subunits composed of two heptameric rings stacked back-to-back. Interacts with the co-chaperonin GroES.

It localises to the cytoplasm. The enzyme catalyses ATP + H2O + a folded polypeptide = ADP + phosphate + an unfolded polypeptide.. Together with its co-chaperonin GroES, plays an essential role in assisting protein folding. The GroEL-GroES system forms a nano-cage that allows encapsulation of the non-native substrate proteins and provides a physical environment optimized to promote and accelerate protein folding. The polypeptide is Chaperonin GroEL (Acidithiobacillus ferrooxidans (strain ATCC 23270 / DSM 14882 / CIP 104768 / NCIMB 8455) (Ferrobacillus ferrooxidans (strain ATCC 23270))).